We begin with the raw amino-acid sequence, 421 residues long: Hydrolyase poxO (421 aa).

The Nucleophile role is filled by serine 239.

The protein belongs to the AB hydrolase superfamily. FUS2 hydrolase family. Homodimer.

It functions in the pathway secondary metabolite biosynthesis. Its function is as follows. Hydrolyase; part of the gene cluster that mediates the biosynthesis of oxaleimides, cytotoxic compounds containing an unusual disubstituted succinimide moiety. The first step of the pathway is provided by the HR-PKS poxF that serves in a new mode of collaborative biosynthesis with the PKS-NRPS poxE, by providing the olefin containing amino acid substrate via the synthesis of an ACP-bound dec-4-enoate. The cytochrome P450 monooxygenase poxM-catalyzed oxidation at the alpha-position creates the enzyme-bound 2-hydroxydec-4-enoyl-ACP thioester, which may be prone to spontaneous hydrolysis to yield 2-hydroxydec-4-enoic acid due to increased electrophilicity of the carbonyl. 2-hydroxydec-4-enoic acid can then be further oxidized by poxM to yield the alpha-ketoacid 2-oxodec-4-enoicacid, which is reductively aminated by the aminotransferase poxL to yield (S,E)-2-aminodec-4-enoic acid. The Hybrid PKS-NRPS synthetase poxE then performs condensation between the octaketide product of its PKS modules and the amino group of (S,E)-2-aminodec-4-enoic acid which is activated and incorporated by the adenylation domain. The resulting aminoacyl product can be cyclized by the Diels-Alderase PoxQ and reductively released by the reductive (R) domain of poxE to yield an aldehyde intermediate. The released aldehyde is then substrate for a Knoevenagel condensation by the hydrolyase poxO followed by an oxidation at the 5-position of the pyrrolidone ring. The presence of the olefin from the amino acid building block allows for migration of the substituted allyl group to occur. This allylic transposition reaction takes place in a conjugate addition, semipinacol-like fashion to yield a succinimide intermediate. Iterative two-electron oxidations of the C7 methyl of the succinimide intermediate to the carboxylic acid can be catalyzed by one of two remaining cytochrome P450 monooxygenasess poxC or poxD to yield oxaleimide A. Subsequent oxidation yields the maleimide scaffold oxaleimide I. Both oxaleimide A and oxaleimide I can undergo oxidative modifications in the decalin ring to yield the series of products oxaleimides B to H. The chain is Hydrolyase poxO from Penicillium oxalicum (strain 114-2 / CGMCC 5302) (Penicillium decumbens).